The primary structure comprises 98 residues: Co-chaperonin GroES 1 (98 aa).

This sequence belongs to the GroES chaperonin family. Heptamer of 7 subunits arranged in a ring. Interacts with the chaperonin GroEL.

It localises to the cytoplasm. Its function is as follows. Together with the chaperonin GroEL, plays an essential role in assisting protein folding. The GroEL-GroES system forms a nano-cage that allows encapsulation of the non-native substrate proteins and provides a physical environment optimized to promote and accelerate protein folding. GroES binds to the apical surface of the GroEL ring, thereby capping the opening of the GroEL channel. The polypeptide is Co-chaperonin GroES 1 (Rhodopseudomonas palustris (strain ATCC BAA-98 / CGA009)).